Consider the following 290-residue polypeptide: GTPase Era (290 aa).

The Era-type G domain occupies 2–144 (KVLKVGVLGP…AIILEEFKPQ (143 aa)). Positions 10 to 17 (GPTNAGKS) are G1. 10–17 (GPTNAGKS) is a GTP binding site. Residues 36-40 (NTTLL) form a G2 region. Residues 58–61 (DVPG) are G3. 58 to 62 (DVPGF) is a GTP binding site. A G4 region spans residues 97–100 (NKIE). A G5 region spans residues 121–123 (INK). 122–125 (NKFH) contributes to the GTP binding site. In terms of domain architecture, KH type-2 spans 201–279 (CKNEIPHIAR…FIDIFVKTEK (79 aa)).

This sequence belongs to the TRAFAC class TrmE-Era-EngA-EngB-Septin-like GTPase superfamily. Era GTPase family. In terms of assembly, monomer.

The protein localises to the cytoplasm. The protein resides in the cell membrane. Functionally, an essential GTPase that binds both GDP and GTP, with rapid nucleotide exchange. Plays a role in 16S rRNA processing and 30S ribosomal subunit biogenesis and possibly also in cell cycle regulation and energy metabolism. The chain is GTPase Era from Mycoplasma genitalium (strain ATCC 33530 / DSM 19775 / NCTC 10195 / G37) (Mycoplasmoides genitalium).